Reading from the N-terminus, the 339-residue chain is MamK-like protein (339 aa).

ATP contacts are provided by residues Tyr18–Ser19, Asp74, Ala162–Thr164, and Lys216–Ala220.

The protein belongs to the FtsA/MreB family. MamK subfamily. As to quaternary structure, forms cytoplasmic filament polymers. Forms filaments with MamK.

It is found in the cytoplasm. The protein localises to the cytoskeleton. It carries out the reaction ATP + H2O = ADP + phosphate + H(+). Protein with ATPase activity which forms pole-to-pole filaments in vivo, probably with MamK. Efficient filament formation requires MamK. Probably promotes turnover of MamK filaments, by providing a monomer pool. In vivo, in the absence of its paralog MamK, forms thin filaments from pole to pole. In vitro forms straight filaments and bundles in the absence of ATP. Filament formation is triggered by KCl and MgCl(2); polymerizes more slowly and makes thinner filaments than MamK. Expression in E.coli yields a filament in the cell's longitudinal axis; the protein nucleates at one pole or the cell septum. This is MamK-like protein from Paramagnetospirillum magneticum (strain ATCC 700264 / AMB-1) (Magnetospirillum magneticum).